The primary structure comprises 1058 residues: MYIVKPSWLCHSDDQKKFEVYSVTVSPDNQRVATGGQDGKVRIWSAQSIRDSAKGDNESSDTPSNLSGAPAPGAKQLCSMATHNGAVTVVRFSPDGRYLATGSDDRVVLVWERDSTKVPRKEFGSSGEADTESWIVRKRLAAHDNDIQDLAWAPDSSILVTVGLDSGVIVWSGTTFEKIQRLDAHNSHVKGITFDPANKFFATASDDRTVQIFRYNRASATDVTFSTEATITSPFKQSPLSTYFRRCSWSPDGNHIAAANATNGPVSVVAIINRGTWDSDISLIGHEAPCEVAAFCPRIFARTKEAAEKKDKKSSSEKDKESDVIDVDAEPKVPESVPITVIASAGQDKTLTIWNTSNPRPVVVCHDMALKTITDLAWSQDGMSLFATSLDGSISYVQFEEGELGYVVSMEENESRLTRYGGGKEAAQIPESVEQLVLEEKVEAKEVKDSEKRMEELMGAAGAGSKAIASGATVIPSPASTVAAAAAAPVTTTARATTPLTAATSNPSTPAKPAKQKVTITKDGRKRVAPQLLTTTSSSVQGTLPAATTSSAAVPVASATAETIPVNDFSKPSYALPKGGVSTLVIGSKRRSDDLEDGSNGIQTALKKTRPDDDVPEYIAPVVVSPATTTSQVRLGAPKVRNLLMRSMTVRDAEKPRMANESVSLANGENTSSSSAPHSFNFEVRNGSGNDQTPTKVSVTRNSQVVFVDFVPYYVHLIAGNGCYFWATSAEDGSIVVYSPNGRRMLPPLVTGAPLSFLESQNEYLLAISSVGMLYLWNVVDKKAVFPPVSLAPILDSGSRYEDGGVLRGPHVTQCGVTGSGRVIITLSTGCGYTYDEGLRSWCRLSEPWWATGSQYWSATQLLGDESAKSRWVLAVEERTAEEAQRRAGGRGRYLKQLTRATLNREGYEGMEGVVSIAHLENRIAAAEMLESKHELRTFIIMYARRIAEEGLRSRVDELCRELLGPGKSQDSTWSPTVCGLDKHELLKEVVLKIGKYRESQRVAVVYGQAIGLLEDEVLGVASSSKSAASKGSKDKEDNEEEDGDHDMTDFKDAMSEQ.

WD repeat units lie at residues 15 to 54 (QKKF…DSAK), 82 to 121 (THNG…VPRK), 142 to 181 (AHDN…KIQR), 184 to 223 (AHNS…ATDV), 239 to 282 (PLST…SDIS), 319 to 364 (DKES…PVVV), and 368 to 409 (MALK…YVVS). Positions 49–73 (IRDSAKGDNESSDTPSNLSGAPAPG) are disordered. The disordered stretch occupies residues 307 to 327 (AEKKDKKSSSEKDKESDVIDV). Disordered stretches follow at residues 500–536 (LTAA…LTTT), 591–610 (RSDD…KKTR), 651–696 (RDAE…TPTK), and 1023–1058 (SSSK…MSEQ). 2 stretches are compositionally biased toward polar residues: residues 661–678 (ESVS…SAPH) and 687–696 (GSGNDQTPTK). Over residues 1046-1058 (HDMTDFKDAMSEQ) the composition is skewed to basic and acidic residues.

It belongs to the WD repeat HIR1 family.

It is found in the nucleus. Functionally, required for replication-independent chromatin assembly and for the periodic repression of histone gene transcription during the cell cycle. The chain is Protein HIR1 (HIR1) from Yarrowia lipolytica (strain CLIB 122 / E 150) (Yeast).